A 519-amino-acid polypeptide reads, in one-letter code: Ribonuclease Y (519 aa).

A helical membrane pass occupies residues 3–23 (LIEIVLLLVGMAVGAATGFIL). The KH domain maps to 209-272 (TVTAVSLPSE…QIAKMALERL (64 aa)). One can recognise an HD domain in the interval 335–428 (VLQHSMEVAS…VQAADSLSGA (94 aa)).

This sequence belongs to the RNase Y family.

The protein localises to the cell membrane. Functionally, endoribonuclease that initiates mRNA decay. This chain is Ribonuclease Y, found in Oleidesulfovibrio alaskensis (strain ATCC BAA-1058 / DSM 17464 / G20) (Desulfovibrio alaskensis).